The chain runs to 172 residues: Centrin-1 (172 aa).

Residues 1–30 (MASSYRKPTVASTSQKRKVGPKPELTEEQK) are disordered. EF-hand domains follow at residues 28–63 (EQKQ…LGFE), 64–99 (PRKE…KMAE), 101–136 (DTKE…LGEN), and 137–172 (LTDE…TNLY). 5 residues coordinate Ca(2+): Asp-41, Asp-43, Ser-45, Thr-47, and Glu-52. 5 residues coordinate Ca(2+): Asp-150, Asp-152, Asp-154, Glu-156, and Glu-161.

The protein belongs to the centrin family. As to quaternary structure, monomer. Interacts with CIMAP3. Interacts with USP49.

Its subcellular location is the cytoplasm. It localises to the cytoskeleton. It is found in the microtubule organizing center. The protein resides in the centrosome. Functionally, plays a fundamental role in microtubule-organizing center structure and function. Plays a role in sperm cilia formation. The chain is Centrin-1 (CETN1) from Bos taurus (Bovine).